We begin with the raw amino-acid sequence, 298 residues long: Inosose dehydratase 2 (298 aa).

This sequence belongs to the IolE/MocC family. Glutathione serves as cofactor. It depends on Co(2+) as a cofactor. Mn(2+) is required as a cofactor.

The enzyme catalyses scyllo-inosose = 3D-3,5/4-trihydroxycyclohexane-1,2-dione + H2O. The protein operates within polyol metabolism; myo-inositol degradation into acetyl-CoA; acetyl-CoA from myo-inositol: step 2/7. Its function is as follows. Catalyzes the dehydration of inosose (2-keto-myo-inositol, 2KMI or 2,4,6/3,5-pentahydroxycyclohexanone) to 3D-(3,5/4)-trihydroxycyclohexane-1,2-dione (D-2,3-diketo-4-deoxy-epi-inositol). In Bacillus cereus (strain ZK / E33L), this protein is Inosose dehydratase 2.